The following is a 1047-amino-acid chain: Ribonucleoside-diphosphate reductase subunit alpha (1047 aa).

ATP-cone domains lie at 9 to 111 (CTIV…KAHR), 118 to 219 (LSVV…ARVR), and 237 to 327 (VEVL…EALG). Substrate-binding positions include threonine 442, 457 to 458 (SC), glycine 486, 670 to 674 (NLCTE), and 857 to 861 (PTATI). Cysteines 458 and 687 form a disulfide. Catalysis depends on asparagine 670, which acts as the Proton acceptor. Catalysis depends on cysteine 672, which acts as the Cysteine radical intermediate. The active-site Proton acceptor is glutamate 674.

This sequence belongs to the ribonucleoside diphosphate reductase large chain family. In terms of assembly, tetramer of two alpha and two beta subunits.

It catalyses the reaction a 2'-deoxyribonucleoside 5'-diphosphate + [thioredoxin]-disulfide + H2O = a ribonucleoside 5'-diphosphate + [thioredoxin]-dithiol. Under complex allosteric control mediated by deoxynucleoside triphosphates and ATP binding. The type of nucleotide bound at the specificity site determines substrate preference. It seems probable that ATP makes the enzyme reduce CDP and UDP, dGTP favors ADP reduction and dTTP favors GDP reduction. Functionally, provides the precursors necessary for DNA synthesis. Catalyzes the biosynthesis of deoxyribonucleotides from the corresponding ribonucleotides. The chain is Ribonucleoside-diphosphate reductase subunit alpha (nrdA) from Chlamydia trachomatis serovar D (strain ATCC VR-885 / DSM 19411 / UW-3/Cx).